Here is a 232-residue protein sequence, read N- to C-terminus: N-(5'-phosphoribosyl)anthranilate isomerase (232 aa).

This sequence belongs to the TrpF family.

The enzyme catalyses N-(5-phospho-beta-D-ribosyl)anthranilate = 1-(2-carboxyphenylamino)-1-deoxy-D-ribulose 5-phosphate. The protein operates within amino-acid biosynthesis; L-tryptophan biosynthesis; L-tryptophan from chorismate: step 3/5. This chain is N-(5'-phosphoribosyl)anthranilate isomerase (TRP1), found in Lipomyces starkeyi (Oleaginous yeast).